Reading from the N-terminus, the 191-residue chain is Peptidyl-tRNA hydrolase (191 aa).

Tyrosine 14 lines the tRNA pocket. Histidine 19 functions as the Proton acceptor in the catalytic mechanism. Residues tyrosine 64, asparagine 66, and asparagine 112 each coordinate tRNA.

It belongs to the PTH family. As to quaternary structure, monomer.

It localises to the cytoplasm. The catalysed reaction is an N-acyl-L-alpha-aminoacyl-tRNA + H2O = an N-acyl-L-amino acid + a tRNA + H(+). Hydrolyzes ribosome-free peptidyl-tRNAs (with 1 or more amino acids incorporated), which drop off the ribosome during protein synthesis, or as a result of ribosome stalling. In terms of biological role, catalyzes the release of premature peptidyl moieties from peptidyl-tRNA molecules trapped in stalled 50S ribosomal subunits, and thus maintains levels of free tRNAs and 50S ribosomes. The chain is Peptidyl-tRNA hydrolase from Clostridium beijerinckii (strain ATCC 51743 / NCIMB 8052) (Clostridium acetobutylicum).